A 370-amino-acid polypeptide reads, in one-letter code: Dihydrolipoyllysine-residue acetyltransferase component of acetoin cleaving system (370 aa).

A Lipoyl-binding domain is found at 4–79 (IHTLTMPKWG…PVGALLAVVV (76 aa)). The residue at position 45 (Lys-45) is an N6-lipoyllysine. The AB hydrolase-1 domain maps to 135–355 (PLVLVHGFGG…EAGHMVQMEA (221 aa)).

(R)-lipoate is required as a cofactor.

The catalysed reaction is N(6)-[(R)-dihydrolipoyl]-L-lysyl-[protein] + acetyl-CoA = N(6)-[(R)-S(8)-acetyldihydrolipoyl]-L-lysyl-[protein] + CoA. It functions in the pathway ketone degradation; acetoin degradation. The polypeptide is Dihydrolipoyllysine-residue acetyltransferase component of acetoin cleaving system (acoC) (Pseudomonas putida (Arthrobacter siderocapsulatus)).